The chain runs to 149 residues: MFKHSTGILSRTVSARSPTLVLRTFTTKAPKIYTFDQVRNLVEHPNDKKLLVDVREPKEVKDYKMPTTINIPVNSAPGALGLPEKEFHKVFQFAKPPHDKELIFLCAKGVRAKTAEELARSYGYENTGIYPGSITEWLAKGGADVKPKK.

A mitochondrion-targeting transit peptide spans 1–25 (MFKHSTGILSRTVSARSPTLVLRTF). In terms of domain architecture, Rhodanese spans 45 to 146 (PNDKKLLVDV…WLAKGGADVK (102 aa)). The active-site Cysteine persulfide intermediate is Cys-106.

The protein localises to the mitochondrion. It catalyses the reaction thiosulfate + hydrogen cyanide = thiocyanate + sulfite + 2 H(+). Functionally, thiosulfate sulfurtransferase which catalyzes the transfer of sulfane sulfur from thiosulfate to cyanide. This is Thiosulfate sulfurtransferase RDL2, mitochondrial (RDL2) from Saccharomyces cerevisiae (strain ATCC 204508 / S288c) (Baker's yeast).